A 190-amino-acid chain; its full sequence is Somatotropin (190 aa).

H19 provides a ligand contact to Zn(2+). The cysteines at positions 52 and 163 are disulfide-linked. S105 bears the Phosphoserine mark. E172 provides a ligand contact to Zn(2+). The cysteines at positions 180 and 188 are disulfide-linked.

Belongs to the somatotropin/prolactin family.

It is found in the secreted. Its function is as follows. Plays an important role in growth control. Its major role in stimulating body growth is to stimulate the liver and other tissues to secrete IGF1. It stimulates both the differentiation and proliferation of myoblasts. It also stimulates amino acid uptake and protein synthesis in muscle and other tissues. This chain is Somatotropin (GH1), found in Balaenoptera borealis (Sei whale).